A 791-amino-acid chain; its full sequence is MFIPQNKSKRLSLDKIGQLEEDLELNPLDYNKWQKLIDQLIIKDNQEQVRNTFDKYLKIFKFDGASWCKYIKYELNRDEKEKVENLFQQCLGITDNVELCRLYVDYVRGVTDFVTGGEKARGVVVQAFEFAINKVGIDITSESLWQDYIQFLQSWNPNANWEQQQKIDLIRKVYKKFLTIPTENIEVSWSQYTKWENELNPATASKFISEKSGEFMLARSWNTEFNRITDKSLKRNLNPGDHNDEDVVKQLKYWLRWLELEKENKLELKDETVNDKRIQYVYKQATYALPFVPEIWFQYVKYLLVQNEEGNLQESIRLLKEGGLVLNPKSMLLTFQLAELYERDNSFNNAKIVFKNLLDALQKDYNSVANQIAELKERIDPATDKDNIQEDDDDNEEEEEEENDNDNDNDNGGDSKQQPPSKKLKLNPNGGQNGSNSENNGEAVSAPSSSVKLPQVYRISLADSKQLLSFENEQKRLSDAITLTYVKFMIASKRSEGIKEARNVFKQARKFTDIGYQIFIESALLEHYSDKKSTALKIFDLGKKNFATNGKFLLNYLDYLIMINDVDTMRTVIQSSDANFTKEIGNLQEELKLTNLDPITRKKLEKQITNLKKFLKQLYKKYISFAATFLSLDVTHSFAKKCEQLFPKDDPIDLFTDRYKLDNINIIKKDELGRDDILTSFDGIIDEEELQRLKRRKLSNGSGSSSSYSFNEEESKSAIKNIEEQKTRVQQEQDQENQGINKPEESFVGPSIIALMSALPNASYFGLPSESVFNSEKLVTLFANLSNIPSQ.

HAT repeat units follow at residues 44-76 (DNQE…YELN), 78-112 (DEKE…GVTD), 119-154 (KARG…FLQS), 165-198 (QKID…WENE), 231-263 (KSLK…LEKE), and 273-305 (VNDK…YLLV). Over residues 379-388 (IDPATDKDNI) the composition is skewed to basic and acidic residues. Disordered regions lie at residues 379–449 (IDPA…APSS) and 725–745 (QKTR…KPEE). Positions 389–411 (QEDDDDNEEEEEEENDNDNDNDN) are enriched in acidic residues. A compositionally biased stretch (low complexity) spans 427–442 (NPNGGQNGSNSENNGE).

It localises to the nucleus. Its subcellular location is the cytoplasm. Functionally, component of the cleavage factor IA (CFIA) complex, which is involved in the endonucleolytic cleavage during polyadenylation-dependent pre-mRNA 3'-end formation. This chain is mRNA 3'-end-processing protein RNA14 (RNA14), found in Candida albicans (strain SC5314 / ATCC MYA-2876) (Yeast).